Consider the following 683-residue polypeptide: Zinc finger protein 510 (683 aa).

A KRAB domain is found at 46 to 117 (VSFKDVTIEF…EEEFSNQSHP (72 aa)). The C2H2-type 1; degenerate zinc finger occupies 254–276 (FECNKIGKAFNDKANCVKHNSSH). 9 C2H2-type zinc fingers span residues 404 to 426 (YKCN…QRTH), 432 to 454 (FECS…QRIH), 460 to 482 (YKCN…QRIH), 488 to 510 (YECS…HRIH), 516 to 538 (FQCN…QRTH), 544 to 566 (YQCN…QKTH), 572 to 594 (FKCN…QRIH), 600 to 622 (FKCN…QRIH), and 628 to 650 (FQCN…QRTH).

The protein belongs to the krueppel C2H2-type zinc-finger protein family.

The protein localises to the nucleus. Its function is as follows. May be involved in transcriptional regulation. The chain is Zinc finger protein 510 (ZNF510) from Homo sapiens (Human).